Here is a 229-residue protein sequence, read N- to C-terminus: Large ribosomal subunit protein uL3 (229 aa).

The residue at position 151 (Q151) is an N5-methylglutamine.

The protein belongs to the universal ribosomal protein uL3 family. Part of the 50S ribosomal subunit. Forms a cluster with proteins L14 and L19. In terms of processing, methylated by PrmB.

Its function is as follows. One of the primary rRNA binding proteins, it binds directly near the 3'-end of the 23S rRNA, where it nucleates assembly of the 50S subunit. The protein is Large ribosomal subunit protein uL3 of Paramagnetospirillum magneticum (strain ATCC 700264 / AMB-1) (Magnetospirillum magneticum).